The sequence spans 103 residues: Pyrimidine/purine nucleoside phosphorylase (103 aa).

This sequence belongs to the nucleoside phosphorylase PpnP family.

The enzyme catalyses a purine D-ribonucleoside + phosphate = a purine nucleobase + alpha-D-ribose 1-phosphate. It catalyses the reaction adenosine + phosphate = alpha-D-ribose 1-phosphate + adenine. It carries out the reaction cytidine + phosphate = cytosine + alpha-D-ribose 1-phosphate. The catalysed reaction is guanosine + phosphate = alpha-D-ribose 1-phosphate + guanine. The enzyme catalyses inosine + phosphate = alpha-D-ribose 1-phosphate + hypoxanthine. It catalyses the reaction thymidine + phosphate = 2-deoxy-alpha-D-ribose 1-phosphate + thymine. It carries out the reaction uridine + phosphate = alpha-D-ribose 1-phosphate + uracil. The catalysed reaction is xanthosine + phosphate = alpha-D-ribose 1-phosphate + xanthine. Its function is as follows. Catalyzes the phosphorolysis of diverse nucleosides, yielding D-ribose 1-phosphate and the respective free bases. Can use uridine, adenosine, guanosine, cytidine, thymidine, inosine and xanthosine as substrates. Also catalyzes the reverse reactions. This is Pyrimidine/purine nucleoside phosphorylase from Citrifermentans bemidjiense (strain ATCC BAA-1014 / DSM 16622 / JCM 12645 / Bem) (Geobacter bemidjiensis).